A 271-amino-acid chain; its full sequence is GTP cyclohydrolase FolE2 (271 aa).

Belongs to the GTP cyclohydrolase IV family.

It catalyses the reaction GTP + H2O = 7,8-dihydroneopterin 3'-triphosphate + formate + H(+). Its pathway is cofactor biosynthesis; 7,8-dihydroneopterin triphosphate biosynthesis; 7,8-dihydroneopterin triphosphate from GTP: step 1/1. Its function is as follows. Converts GTP to 7,8-dihydroneopterin triphosphate. The sequence is that of GTP cyclohydrolase FolE2 from Geotalea uraniireducens (strain Rf4) (Geobacter uraniireducens).